The sequence spans 803 residues: Bromodomain-containing protein 2 (803 aa).

Methionine 1 carries the N-acetylmethionine modification. A disordered region spans residues 1–28 (MLQNVTPHSKLPGEGNAGLLGLGPEAAA). Threonine 6 is subject to Phosphothreonine. A Phosphoserine modification is found at serine 37. Residues 53–73 (ALQLTPANPPPPEVSNPKKPG) are disordered. Residues 74-180 (RVTNQLQYLH…KIFLQKVASM (107 aa)) form the Bromo 1 domain. 6 residues coordinate a protein: aspartate 112, tyrosine 155, asparagine 156, lysine 157, aspartate 160, and aspartate 161. Disordered regions lie at residues 268–349 (PPAQ…LSEQ), 456–653 (EPLE…RQLS), and 739–803 (EKRL…SDSG). Positions 285-298 (TTTPTPTAILAPGS) are enriched in low complexity. Phosphoserine occurs at positions 298, 301, and 305. The span at 316-332 (MRRESGRPIKPPRKDLP) shows a compositional bias: basic and acidic residues. Residues 344–453 (GKLSEQLKHC…DVFEFRYAKM (110 aa)) form the Bromo 2 domain. Residues 481-515 (SSEESSSESSSEEDEEEDEEEEEEEEESESSDSEE) show a composition bias toward acidic residues. A compositionally biased stretch (basic residues) spans 545–567 (KPKRKREKKEKKKKRKAEKHRGR). Residues 556-560 (KKKRK) carry the Nuclear localization signal motif. Residues 634-716 (DSEEEEESRP…SCLRKKPRKP (83 aa)) form the NET domain. A Phosphoserine modification is found at serine 635. Residues 641-652 (SRPMSYDEKRQL) show a composition bias toward basic and acidic residues. Residues 777–797 (SASSSSSDSSSSSSSSSSSDT) show a composition bias toward low complexity.

The protein belongs to the BET family. In terms of assembly, homodimer. Interacts with E2F1. Interacts with (acetylated) STAT3; promoting STAT3 recruitment to chromatin. Interacts with CTCF; promoting BRD2 recruitment to chromatin.

The protein resides in the nucleus. The protein localises to the chromosome. Functionally, chromatin reader protein that specifically recognizes and binds histone H4 acetylated at 'Lys-5' and 'Lys-12' (H4K5ac and H4K12ac, respectively), thereby controlling gene expression and remodeling chromatin structures. Recruits transcription factors and coactivators to target gene sites, and activates RNA polymerase II machinery for transcriptional elongation. Plays a key role in genome compartmentalization via its association with CTCF and cohesin: recruited to chromatin by CTCF and promotes formation of topologically associating domains (TADs) via its ability to bind acetylated histones, contributing to CTCF boundary formation and enhancer insulation. Also recognizes and binds acetylated non-histone proteins, such as STAT3. Involved in inflammatory response by regulating differentiation of naive CD4(+) T-cells into T-helper Th17: recognizes and binds STAT3 acetylated at 'Lys-87', promoting STAT3 recruitment to chromatin. In addition to acetylated lysines, also recognizes and binds lysine residues on histones that are both methylated and acetylated on the same side chain to form N6-acetyl-N6-methyllysine (Kacme), an epigenetic mark of active chromatin associated with increased transcriptional initiation. Specifically binds histone H4 acetyl-methylated at 'Lys-5' and 'Lys-12' (H4K5acme and H4K12acme, respectively). The sequence is that of Bromodomain-containing protein 2 (BRD2) from Canis lupus familiaris (Dog).